Here is a 76-residue protein sequence, read N- to C-terminus: Small ribosomal subunit protein bS18 (76 aa).

The protein belongs to the bacterial ribosomal protein bS18 family. Part of the 30S ribosomal subunit. Forms a tight heterodimer with protein bS6.

Functionally, binds as a heterodimer with protein bS6 to the central domain of the 16S rRNA, where it helps stabilize the platform of the 30S subunit. The protein is Small ribosomal subunit protein bS18 of Petrotoga mobilis (strain DSM 10674 / SJ95).